The sequence spans 122 residues: EPIDERMAL PATTERNING FACTOR-like protein 1 (122 aa).

A signal peptide spans 1–26 (MFAIYKSTLLLLPLILILLITPQVSS). 3 disulfide bridges follow: Cys55–Cys113, Cys59–Cys65, and Cys62–Cys115.

It belongs to the plant cysteine rich small secretory peptide family. Epidermal patterning factor subfamily.

The protein resides in the secreted. Its function is as follows. Controls stomatal patterning. The chain is EPIDERMAL PATTERNING FACTOR-like protein 1 from Arabidopsis thaliana (Mouse-ear cress).